Reading from the N-terminus, the 330-residue chain is 2-oxoisovalerate dehydrogenase subunit alpha (330 aa).

Residues phenylalanine 44, tyrosine 73, 107–110, and serine 123 contribute to the substrate site; that span reads MPGH. 72 to 74 lines the thiamine diphosphate pocket; that stretch reads YYR. Residues 123–125, 153–159, 183–187, and histidine 252 contribute to the thiamine diphosphate site; these read SPV, GEGSSNQ, and NKYAI. Mg(2+) is bound by residues glutamate 154, asparagine 183, and tyrosine 185. A disordered region spans residues 249-272; it reads LTPHSSDDDDSSYRGREEVEEAKK. Positions 259 to 272 are enriched in basic and acidic residues; sequence SSYRGREEVEEAKK.

It belongs to the BCKDHA family. Heterotetramer of two alpha and two beta chains. Directly associated with ODBB in the E1 complex. The cofactor is thiamine diphosphate.

It catalyses the reaction N(6)-[(R)-lipoyl]-L-lysyl-[protein] + 3-methyl-2-oxobutanoate + H(+) = N(6)-[(R)-S(8)-2-methylpropanoyldihydrolipoyl]-L-lysyl-[protein] + CO2. Functionally, the branched-chain alpha-keto dehydrogenase complex catalyzes the overall conversion of alpha-keto acids to acyl-CoA and CO(2). It contains multiple copies of three enzymatic components: branched-chain alpha-keto acid decarboxylase (E1), lipoamide acyltransferase (E2) and lipoamide dehydrogenase (E3). This Bacillus subtilis (strain 168) protein is 2-oxoisovalerate dehydrogenase subunit alpha (bfmBAA).